We begin with the raw amino-acid sequence, 372 residues long: DNA replication and repair protein RecF (372 aa).

30 to 37 provides a ligand contact to ATP; the sequence is GENAQGKT.

It belongs to the RecF family.

Its subcellular location is the cytoplasm. Its function is as follows. The RecF protein is involved in DNA metabolism; it is required for DNA replication and normal SOS inducibility. RecF binds preferentially to single-stranded, linear DNA. It also seems to bind ATP. The chain is DNA replication and repair protein RecF from Exiguobacterium sp. (strain ATCC BAA-1283 / AT1b).